The chain runs to 936 residues: UPF0746 protein DDB_G0280787 (936 aa).

Residues 1-19 (MISNKRKEIDTIDGHHEKD) are compositionally biased toward basic and acidic residues. Residues 1-30 (MISNKRKEIDTIDGHHEKDNDDDDSDGIDN) are disordered. Residues 44–78 (SGSTNYRELQIIAKSLGLASNGKKQLVYNRIEGYF) form the SAP domain. Residues 91–110 (ETNQQEEKKEEEQQQPQPQE) form a disordered region.

The protein belongs to the UPF0746 family.

In Dictyostelium discoideum (Social amoeba), this protein is UPF0746 protein DDB_G0280787.